A 376-amino-acid chain; its full sequence is DNA replication and repair protein RecF (376 aa).

30–37 serves as a coordination point for ATP; sequence GNNAQGKS.

The protein belongs to the RecF family.

Its subcellular location is the cytoplasm. The RecF protein is involved in DNA metabolism; it is required for DNA replication and normal SOS inducibility. RecF binds preferentially to single-stranded, linear DNA. It also seems to bind ATP. This chain is DNA replication and repair protein RecF, found in Nostoc sp. (strain PCC 7120 / SAG 25.82 / UTEX 2576).